The chain runs to 412 residues: Multidrug resistance protein MdtA (412 aa).

Positions 1-21 (MKGSNIRRWGAALAVVIIAGA) are cleaved as a signal peptide. Disordered stretches follow at residues 33–53 (GSGA…RHGR) and 389–412 (VVTA…GARS).

The protein belongs to the membrane fusion protein (MFP) (TC 8.A.1) family. As to quaternary structure, part of a tripartite efflux system composed of MdtA, MdtB and MdtC.

It is found in the cell inner membrane. This is Multidrug resistance protein MdtA from Klebsiella pneumoniae subsp. pneumoniae (strain ATCC 700721 / MGH 78578).